The primary structure comprises 228 residues: Cytochrome c oxidase subunit 2 (228 aa).

The Mitochondrial intermembrane portion of the chain corresponds to 1–26 (MATWANLGLQNSSSPLMEQLNFFHDH). Residues 27–48 (TLLILIMITVMIAYIMFMLFFN) traverse the membrane as a helical segment. Over 49–62 (KFTNRYLLHGQTIE) the chain is Mitochondrial matrix. The chain crosses the membrane as a helical span at residues 63–82 (IIWTILPAIILMFIAFPSLR). Over 83 to 228 (LLYLMDEINS…FIKWISSQMN (146 aa)) the chain is Mitochondrial intermembrane. Residues histidine 161, cysteine 196, glutamate 198, cysteine 200, histidine 204, and methionine 207 each coordinate Cu cation. Glutamate 198 contributes to the Mg(2+) binding site.

This sequence belongs to the cytochrome c oxidase subunit 2 family. As to quaternary structure, component of the cytochrome c oxidase (complex IV, CIV), a multisubunit enzyme composed of a catalytic core of 3 subunits and several supernumerary subunits. The complex exists as a monomer or a dimer and forms supercomplexes (SCs) in the inner mitochondrial membrane with ubiquinol-cytochrome c oxidoreductase (cytochrome b-c1 complex, complex III, CIII). Cu cation serves as cofactor.

It is found in the mitochondrion inner membrane. It catalyses the reaction 4 Fe(II)-[cytochrome c] + O2 + 8 H(+)(in) = 4 Fe(III)-[cytochrome c] + 2 H2O + 4 H(+)(out). Functionally, component of the cytochrome c oxidase, the last enzyme in the mitochondrial electron transport chain which drives oxidative phosphorylation. The respiratory chain contains 3 multisubunit complexes succinate dehydrogenase (complex II, CII), ubiquinol-cytochrome c oxidoreductase (cytochrome b-c1 complex, complex III, CIII) and cytochrome c oxidase (complex IV, CIV), that cooperate to transfer electrons derived from NADH and succinate to molecular oxygen, creating an electrochemical gradient over the inner membrane that drives transmembrane transport and the ATP synthase. Cytochrome c oxidase is the component of the respiratory chain that catalyzes the reduction of oxygen to water. Electrons originating from reduced cytochrome c in the intermembrane space (IMS) are transferred via the dinuclear copper A center (CU(A)) of subunit 2 and heme A of subunit 1 to the active site in subunit 1, a binuclear center (BNC) formed by heme A3 and copper B (CU(B)). The BNC reduces molecular oxygen to 2 water molecules using 4 electrons from cytochrome c in the IMS and 4 protons from the mitochondrial matrix. The protein is Cytochrome c oxidase subunit 2 (COII) of Aedes aegypti (Yellowfever mosquito).